A 410-amino-acid chain; its full sequence is Transposase for insertion sequence element IS801 (410 aa).

This sequence belongs to the transposase 32 family.

Functionally, involved in the transposition of the insertion sequence. This Pseudomonas savastanoi pv. phaseolicola (Pseudomonas syringae pv. phaseolicola) protein is Transposase for insertion sequence element IS801.